Here is a 146-residue protein sequence, read N- to C-terminus: Probable trivalent organoarsenical cleaving enzyme (146 aa).

Positions 2-118 (KYVHVGVNVV…DGNEWEFFYT (117 aa)) constitute a VOC domain. Positions 5 and 62 each coordinate Fe(2+). 2 residues coordinate roxarsone (III): C95 and C96. E114 contacts Fe(2+).

To M.tuberculosis Rv2641. The cofactor is Fe(2+).

The catalysed reaction is methylarsonous acid + AH2 + O2 = arsenite + methanol + A + H(+). The enzyme catalyses roxarsone (III) + AH2 + O2 = 4-hydroxy-3-nitrocyclohexa-2,5-dien-1-one + arsenite + A + H(+). It catalyses the reaction nitarsone (III) + AH2 + O2 = 4-nitrocyclohexa-2,5-dien-1-one + arsenite + A + H(+). It carries out the reaction 4-aminophenylarsonous acid + AH2 + O2 = 4-aminocyclohexa-2,5-dien-1-one + arsenite + A. In terms of biological role, nonheme iron-dependent dioxygenase that can break carbon-arsenic bonds, playing a role in the detoxification of environmental organoarsenical compounds. Catalyzes the oxygen-dependent demethylation of highly toxic methylarsonous acid (MAs(III)) to arsenite, which can then be exported out of the cell. Can also cleave the C-As bond in several trivalent aromatic arsenicals, including roxarsone (III), nitarsone (III) and (4-aminophenyl)arsonous acid. Organoarsenical degradation by this enzyme is proposed to have a significant impact on the arsenic biogeocycle that maintains a balance between organic and inorganic species. This is Probable trivalent organoarsenical cleaving enzyme (yqcK) from Bacillus subtilis (strain 168).